We begin with the raw amino-acid sequence, 589 residues long: Probable arginine--tRNA ligase, cytoplasmic (589 aa).

L-arginine-binding positions include 121 to 123 (SPN), His-132, Tyr-332, Asp-336, and Gln-360. Positions 121–132 (SPNIAKPFHAGH) match the 'HIGH' region motif. An interaction with tRNA region spans residues 469-483 (DTGPYLQYAHARLCS).

This sequence belongs to the class-I aminoacyl-tRNA synthetase family.

It is found in the cytoplasm. The protein resides in the cytosol. It catalyses the reaction tRNA(Arg) + L-arginine + ATP = L-arginyl-tRNA(Arg) + AMP + diphosphate. Forms part of a macromolecular complex that catalyzes the attachment of specific amino acids to cognate tRNAs during protein synthesis. The protein is Probable arginine--tRNA ligase, cytoplasmic (argS1) of Dictyostelium discoideum (Social amoeba).